The chain runs to 206 residues: Probable N-acetyltransferase 14 (206 aa).

The 201-residue stretch at 6–206 (LSVREMREDE…TLVREFSKDL (201 aa)) folds into the N-acetyltransferase domain. Residues 57 to 77 (FVLASFALALLLPVFLAVAAV) form a helical membrane-spanning segment.

The protein belongs to the camello family. Expressed in K-562 and HeLa cell lines and in brain.

The protein localises to the membrane. Probable acetyltransferase. Its function is as follows. May act as a transcription factor that regulates the expression of coproporphyrinogen oxidase by binding to a promoter regulatory element. The sequence is that of Probable N-acetyltransferase 14 (NAT14) from Homo sapiens (Human).